Consider the following 788-residue polypeptide: LPS-assembly protein LptD (788 aa).

The signal sequence occupies residues 1-24 (MKKRFPTLLATLIWTALYSQHTLA).

Belongs to the LptD family. In terms of assembly, component of the lipopolysaccharide transport and assembly complex. Interacts with LptE and LptA.

The protein localises to the cell outer membrane. Its function is as follows. Together with LptE, is involved in the assembly of lipopolysaccharide (LPS) at the surface of the outer membrane. This chain is LPS-assembly protein LptD, found in Yersinia enterocolitica serotype O:8 / biotype 1B (strain NCTC 13174 / 8081).